The chain runs to 548 residues: Chaperonin GroEL 2 (548 aa).

Residues 30–33 (TLGP), Lys-51, 87–91 (DGTTT), Gly-415, and Asp-496 contribute to the ATP site. Residues 529–548 (KDAMPSPDMGGMGGMGGMGF) are disordered. Residues 538–548 (GGMGGMGGMGF) show a composition bias toward gly residues.

It belongs to the chaperonin (HSP60) family. In terms of assembly, forms a cylinder of 14 subunits composed of two heptameric rings stacked back-to-back. Interacts with the co-chaperonin GroES.

It is found in the cytoplasm. The enzyme catalyses ATP + H2O + a folded polypeptide = ADP + phosphate + an unfolded polypeptide.. In terms of biological role, together with its co-chaperonin GroES, plays an essential role in assisting protein folding. The GroEL-GroES system forms a nano-cage that allows encapsulation of the non-native substrate proteins and provides a physical environment optimized to promote and accelerate protein folding. The chain is Chaperonin GroEL 2 from Rhodospirillum rubrum (strain ATCC 11170 / ATH 1.1.1 / DSM 467 / LMG 4362 / NCIMB 8255 / S1).